The sequence spans 354 residues: Glutamine synthetase (354 aa).

A GS beta-grasp domain is found at 22–101 (IQAEYVWVDG…VLAETYNSDG (80 aa)). In terms of domain architecture, GS catalytic spans 108–354 (FRHHAAKVME…IIVETTLLNA (247 aa)).

This sequence belongs to the glutamine synthetase family. As to quaternary structure, homooctamer.

The protein localises to the cytoplasm. It catalyses the reaction L-glutamate + NH4(+) + ATP = L-glutamine + ADP + phosphate + H(+). The chain is Glutamine synthetase (GLN1) from Hebeloma cylindrosporum.